Consider the following 277-residue polypeptide: Glutamate racemase (277 aa).

Residues 9–10 and 41–42 each bind substrate; these read DS and YG. Cys73 acts as the Proton donor/acceptor in catalysis. 74-75 serves as a coordination point for substrate; sequence NT. Cys183 (proton donor/acceptor) is an active-site residue. Residue 184-185 coordinates substrate; it reads TH.

Belongs to the aspartate/glutamate racemases family.

The catalysed reaction is L-glutamate = D-glutamate. The protein operates within cell wall biogenesis; peptidoglycan biosynthesis. Its function is as follows. Provides the (R)-glutamate required for cell wall biosynthesis. The polypeptide is Glutamate racemase (Shewanella denitrificans (strain OS217 / ATCC BAA-1090 / DSM 15013)).